A 343-amino-acid chain; its full sequence is tRNA N6-adenosine threonylcarbamoyltransferase (343 aa).

Fe cation is bound by residues His111 and His115. Substrate is bound by residues 133–137, Asp166, Gly179, Asp183, and Asn273; that span reads AVSGG. Asp301 serves as a coordination point for Fe cation.

It belongs to the KAE1 / TsaD family. Requires Fe(2+) as cofactor.

Its subcellular location is the cytoplasm. The catalysed reaction is L-threonylcarbamoyladenylate + adenosine(37) in tRNA = N(6)-L-threonylcarbamoyladenosine(37) in tRNA + AMP + H(+). Required for the formation of a threonylcarbamoyl group on adenosine at position 37 (t(6)A37) in tRNAs that read codons beginning with adenine. Is involved in the transfer of the threonylcarbamoyl moiety of threonylcarbamoyl-AMP (TC-AMP) to the N6 group of A37, together with TsaE and TsaB. TsaD likely plays a direct catalytic role in this reaction. In Geotalea uraniireducens (strain Rf4) (Geobacter uraniireducens), this protein is tRNA N6-adenosine threonylcarbamoyltransferase.